A 415-amino-acid polypeptide reads, in one-letter code: MSVKRSVSEIEIESVQDQPSVAVGSFFKGFRAPSDTTFDLYKKKKSEKDEFVLHGENERLEYEGYTDSSSQASNQYVVGLFNPEKKSIQLYKAPVLVSKVVSKSSKNLRGPKIKSKSDTRPSALRNALGEAFGTKKAKKAIADLERNRIDSDKLTDSAIDIVDSVRTASKDLPTRAQLDEITSNDRPTPLANIDATDVEQIYPIESIIPKKELQFIRVSSILKEADKEKKLELFPYQNNSKYVAKKLDSLTQPSQMTKLQLLYYLSLLLGVYENRRVNNKTKLLERLNSPPEILVDGILSRFTVIKPGQFGRSKDRSYFIDPQNEDKILCYILAIIMHLDNFIVEITPLAHELNLKPSKVVSLFRVLGAIVKGATVAQAEAFGIPKSTAASYKIATMKVPFKLPEMTRRGRGPRR.

2 positions are modified to phosphoserine: serine 34 and serine 151. Residues 322 to 415 (PQNEDKILCY…MTRRGRGPRR (94 aa)) are interaction with DNA.

This sequence belongs to the eukaryotic RPA49/POLR1E RNA polymerase subunit family. In terms of assembly, component of the RNA polymerase I (Pol I) complex consisting of 14 subunits: RPA135, RPA190, RPC40, RPA14, RPB5, RPO26, RPA43, RPB8, RPA12, RPB10, RPC19, RPC10, RPA49 and RPA34. The complex is composed of a horseshoe-shaped core containing ten subunits (RPA135, RPA190, RPB5, RPO26, RPB8, RPB10, RPC10, RPA12, RPC19 and RPC40) where RPA135 and RPA190 form the DNA-binding cleft. Outside of the core, RPA14 and RPA43 form the stalk that mediates interactions with transcription initiation factors and newly synthesized RNA. Forms a TFIIF-like heterodimer with RPA34; the heterodimer formed by RPA34 and RPA49 can be dissociated from the Pol I core giving rise to a 12 subunit form A* of Pol I (formerly called pol A) that shows impaired transcript elongation activity and increased sensitivity to alpha-amanitin. The heterodimer formed by RPA34 and RPA49 stabilizes subunit RPA12 and stimulates RPA12-dependent RNA cleavage.

The protein resides in the nucleus. It localises to the nucleolus. In terms of biological role, DNA-dependent RNA polymerases catalyze the transcription of DNA into RNA using the four ribonucleoside triphosphates as substrates. Component of RNA polymerase I (Pol I) which synthesizes ribosomal RNA precursors. Besides, RNA polymerase I has intrinsic RNA cleavage activity. The heterodimer formed by RPA34 and RPA49 stimulates transcript elongation by Pol I. Subunit RPA49 can bind both single-stranded and double-stranded DNA. The protein is DNA-directed RNA polymerase I subunit RPA49 (RPA49) of Saccharomyces cerevisiae (strain ATCC 204508 / S288c) (Baker's yeast).